Here is a 177-residue protein sequence, read N- to C-terminus: uncharacterized protein (177 aa).

This is an uncharacterized protein from Acanthamoeba polyphaga (Amoeba).